A 260-amino-acid polypeptide reads, in one-letter code: Indole-3-glycerol phosphate synthase (260 aa).

Belongs to the TrpC family.

The catalysed reaction is 1-(2-carboxyphenylamino)-1-deoxy-D-ribulose 5-phosphate + H(+) = (1S,2R)-1-C-(indol-3-yl)glycerol 3-phosphate + CO2 + H2O. It functions in the pathway amino-acid biosynthesis; L-tryptophan biosynthesis; L-tryptophan from chorismate: step 4/5. This is Indole-3-glycerol phosphate synthase from Bacteroides thetaiotaomicron (strain ATCC 29148 / DSM 2079 / JCM 5827 / CCUG 10774 / NCTC 10582 / VPI-5482 / E50).